The chain runs to 282 residues: ATP phosphoribosyltransferase (282 aa).

This sequence belongs to the ATP phosphoribosyltransferase family. Long subfamily. Mg(2+) is required as a cofactor.

Its subcellular location is the cytoplasm. It catalyses the reaction 1-(5-phospho-beta-D-ribosyl)-ATP + diphosphate = 5-phospho-alpha-D-ribose 1-diphosphate + ATP. It participates in amino-acid biosynthesis; L-histidine biosynthesis; L-histidine from 5-phospho-alpha-D-ribose 1-diphosphate: step 1/9. Feedback inhibited by histidine. Catalyzes the condensation of ATP and 5-phosphoribose 1-diphosphate to form N'-(5'-phosphoribosyl)-ATP (PR-ATP). Has a crucial role in the pathway because the rate of histidine biosynthesis seems to be controlled primarily by regulation of HisG enzymatic activity. In Pyrobaculum calidifontis (strain DSM 21063 / JCM 11548 / VA1), this protein is ATP phosphoribosyltransferase.